The chain runs to 61 residues: Potassium channel toxin kappa-KTx 2.8 (61 aa).

Positions 1 to 21 (GTVYVFLLLLAFGIFTDISNA) are cleaved as a signal peptide. The propeptide occupies 22–35 (CSEQMDDEDSYEVE). Cystine bridges form between C41–C59 and C45–C55.

The protein belongs to the short scorpion toxin superfamily. Potassium channel inhibitor kappa-KTx family. Kappa-KTx 2 subfamily. As to expression, expressed by the venom gland.

It is found in the secreted. Functionally, voltage-gated potassium channel inhibitor (Kv) that acts on Kv1.3/KCNA3 and Kv7.1/KCNQ1. 1 uM of the toxin inhibits Kv1.3/KCNA3 currents by 35.1%, whereas 10 uM of the toxin inhibits Kv7.1/KCNQ1 currents by 44.9%. This is Potassium channel toxin kappa-KTx 2.8 from Heterometrus petersii (Asian forest scorpion).